Here is a 545-residue protein sequence, read N- to C-terminus: T-complex protein 1 subunit gamma (545 aa).

An N-acetylmethionine modification is found at methionine 1. A disordered region spans residues 1-24 (MMGHRPVLVLSQNTKRESGRKVQS). Serine 11 is subject to Phosphoserine. Lysine 15 participates in a covalent cross-link: Glycyl lysine isopeptide (Lys-Gly) (interchain with G-Cter in SUMO2). ADP-binding residues include glycine 42, glycine 94, threonine 95, threonine 96, serine 97, threonine 162, and lysine 163. Glycine 42, glycine 94, threonine 95, and threonine 96 together coordinate ATP. Position 170 is a phosphoserine (serine 170). Position 222 is an N6-acetyllysine (lysine 222). 2 positions are modified to phosphoserine: serine 243 and serine 244. Position 247 is a phosphotyrosine (tyrosine 247). Residues lysine 248 and lysine 249 each participate in a glycyl lysine isopeptide (Lys-Gly) (interchain with G-Cter in SUMO2) cross-link. The residue at position 252 (serine 252) is a Phosphoserine. Residues cysteine 366 and cysteine 372 are joined by a disulfide bond. Lysine 381 is covalently cross-linked (Glycyl lysine isopeptide (Lys-Gly) (interchain with G-Cter in SUMO2)). Glycine 411 provides a ligand contact to ADP. Position 411 (glycine 411) interacts with ATP. A phosphothreonine mark is found at threonine 430 and threonine 459. ADP contacts are provided by glycine 482, glutamate 483, glutamate 497, and lysine 502. Glycine 482 contacts ATP. Glutamate 497 provides a ligand contact to ATP. The segment at 526–545 (HKKKGDDQSRQGGAPDAGQE) is disordered.

Belongs to the TCP-1 chaperonin family. Component of the chaperonin-containing T-complex (TRiC), a hexadecamer composed of two identical back-to-back stacked rings enclosing a protein folding chamber. Each ring is made up of eight different subunits: TCP1/CCT1, CCT2, CCT3, CCT4, CCT5, CCT6A/CCT6, CCT7, CCT8. Interacts with PACRG. Interacts with DNAAF4. Interacts with DLEC1.

It is found in the cytoplasm. The catalysed reaction is ATP + H2O = ADP + phosphate + H(+). Its function is as follows. Component of the chaperonin-containing T-complex (TRiC), a molecular chaperone complex that assists the folding of actin, tubulin and other proteins upon ATP hydrolysis. The TRiC complex mediates the folding of WRAP53/TCAB1, thereby regulating telomere maintenance. As part of the TRiC complex may play a role in the assembly of BBSome, a complex involved in ciliogenesis regulating transports vesicles to the cilia. The sequence is that of T-complex protein 1 subunit gamma (CCT3) from Macaca fascicularis (Crab-eating macaque).